A 164-amino-acid polypeptide reads, in one-letter code: Phosphopantetheine adenylyltransferase (164 aa).

Ser-10 provides a ligand contact to substrate. Residues 10-11 (SF) and His-18 each bind ATP. Positions 42, 74, and 88 each coordinate substrate. Residues 89 to 91 (GLR), Glu-99, and 124 to 130 (YAFLSSS) each bind ATP.

The protein belongs to the bacterial CoaD family. Homohexamer. It depends on Mg(2+) as a cofactor.

The protein resides in the cytoplasm. It carries out the reaction (R)-4'-phosphopantetheine + ATP + H(+) = 3'-dephospho-CoA + diphosphate. Its pathway is cofactor biosynthesis; coenzyme A biosynthesis; CoA from (R)-pantothenate: step 4/5. In terms of biological role, reversibly transfers an adenylyl group from ATP to 4'-phosphopantetheine, yielding dephospho-CoA (dPCoA) and pyrophosphate. The chain is Phosphopantetheine adenylyltransferase from Geobacillus thermodenitrificans (strain NG80-2).